The primary structure comprises 128 residues: UPF0102 protein BCG_2919c (128 aa).

It belongs to the UPF0102 family.

In Mycobacterium bovis (strain BCG / Pasteur 1173P2), this protein is UPF0102 protein BCG_2919c.